Reading from the N-terminus, the 286-residue chain is tRNA (guanine-N(1)-)-methyltransferase (286 aa).

S-adenosyl-L-methionine is bound by residues G116 and 140-145; that span reads IGDYVL. The disordered stretch occupies residues 232-286; that stretch reads DALPPGSLTPHEEALAAEARLHAGRSAETPPPAGAAGSQAEGPPGTSPSDAAVAH.

Belongs to the RNA methyltransferase TrmD family. In terms of assembly, homodimer.

The protein localises to the cytoplasm. The enzyme catalyses guanosine(37) in tRNA + S-adenosyl-L-methionine = N(1)-methylguanosine(37) in tRNA + S-adenosyl-L-homocysteine + H(+). Specifically methylates guanosine-37 in various tRNAs. This chain is tRNA (guanine-N(1)-)-methyltransferase, found in Acidothermus cellulolyticus (strain ATCC 43068 / DSM 8971 / 11B).